Reading from the N-terminus, the 123-residue chain is Small ribosomal subunit protein uS12 (123 aa).

3-methylthioaspartic acid is present on Asp89.

Belongs to the universal ribosomal protein uS12 family. Part of the 30S ribosomal subunit. Contacts proteins S8 and S17. May interact with IF1 in the 30S initiation complex.

In terms of biological role, with S4 and S5 plays an important role in translational accuracy. Functionally, interacts with and stabilizes bases of the 16S rRNA that are involved in tRNA selection in the A site and with the mRNA backbone. Located at the interface of the 30S and 50S subunits, it traverses the body of the 30S subunit contacting proteins on the other side and probably holding the rRNA structure together. The combined cluster of proteins S8, S12 and S17 appears to hold together the shoulder and platform of the 30S subunit. This chain is Small ribosomal subunit protein uS12, found in Prochlorococcus marinus (strain MIT 9211).